The chain runs to 204 residues: Large ribosomal subunit protein eL15z (204 aa).

The segment at leucine 161–arginine 204 is disordered. Positions asparagine 171–tryptophan 192 are enriched in basic residues. Residues lysine 193–arginine 204 show a composition bias toward polar residues.

The protein belongs to the eukaryotic ribosomal protein eL15 family.

The chain is Large ribosomal subunit protein eL15z (RPL15A) from Arabidopsis thaliana (Mouse-ear cress).